Consider the following 547-residue polypeptide: Chaperonin GroEL (547 aa).

ATP is bound by residues Thr-30–Pro-33, Lys-51, Asp-87–Thr-91, Gly-415, and Asp-496.

The protein belongs to the chaperonin (HSP60) family. In terms of assembly, forms a cylinder of 14 subunits composed of two heptameric rings stacked back-to-back. Interacts with the co-chaperonin GroES.

It is found in the cytoplasm. The catalysed reaction is ATP + H2O + a folded polypeptide = ADP + phosphate + an unfolded polypeptide.. Together with its co-chaperonin GroES, plays an essential role in assisting protein folding. The GroEL-GroES system forms a nano-cage that allows encapsulation of the non-native substrate proteins and provides a physical environment optimized to promote and accelerate protein folding. The chain is Chaperonin GroEL from Actinobacillus pleuropneumoniae serotype 7 (strain AP76).